A 143-amino-acid polypeptide reads, in one-letter code: Interleukin-4 (143 aa).

Positions 1-19 are cleaved as a signal peptide; sequence MGLSPQLAAVLLCLLVCTG. 2 disulfides stabilise this stretch: C48-C88 and C70-C115. N-linked (GlcNAc...) asparagine glycosylation is found at N62 and N91.

The protein belongs to the IL-4/IL-13 family.

The protein resides in the secreted. Its function is as follows. Participates in at least several B-cell activation processes as well as of other cell types. It is a costimulator of DNA-synthesis. It induces the expression of class II MHC molecules on resting B-cells. It enhances both secretion and cell surface expression of IgE and IgG1. It also regulates the expression of the low affinity Fc receptor for IgE (CD23) on both lymphocytes and monocytes. Positively regulates IL31RA expression in macrophages. Stimulates autophagy in dendritic cells by interfering with mTORC1 signaling and through the induction of RUFY4. This chain is Interleukin-4 (IL4), found in Meriones unguiculatus (Mongolian jird).